A 272-amino-acid chain; its full sequence is Small ribosomal subunit protein uS2 (272 aa).

The interval 251–272 is disordered; sequence LLTEGAPAAEAPAEAEGETKAE. Positions 253–264 are enriched in low complexity; it reads TEGAPAAEAPAE.

Belongs to the universal ribosomal protein uS2 family.

The protein is Small ribosomal subunit protein uS2 of Bifidobacterium adolescentis (strain ATCC 15703 / DSM 20083 / NCTC 11814 / E194a).